Reading from the N-terminus, the 480-residue chain is Siroheme synthase 1 (480 aa).

The interval 1 to 203 (MNYLPIFADL…GQLEQAEGEL (203 aa)) is precorrin-2 dehydrogenase /sirohydrochlorin ferrochelatase. Residues 22 to 23 (EV) and 43 to 44 (LA) each bind NAD(+). Ser-128 bears the Phosphoserine mark. The tract at residues 222–480 (GEVALVGAGP…DSRPAVVNLA (259 aa)) is uroporphyrinogen-III C-methyltransferase. Pro-231 is a binding site for S-adenosyl-L-methionine. The Proton acceptor role is filled by Asp-254. Lys-276 serves as the catalytic Proton donor. S-adenosyl-L-methionine is bound by residues 307–309 (GGD), Ile-312, 337–338 (TA), Met-389, and Gly-418.

This sequence in the N-terminal section; belongs to the precorrin-2 dehydrogenase / sirohydrochlorin ferrochelatase family. In the C-terminal section; belongs to the precorrin methyltransferase family.

The enzyme catalyses uroporphyrinogen III + 2 S-adenosyl-L-methionine = precorrin-2 + 2 S-adenosyl-L-homocysteine + H(+). The catalysed reaction is precorrin-2 + NAD(+) = sirohydrochlorin + NADH + 2 H(+). It catalyses the reaction siroheme + 2 H(+) = sirohydrochlorin + Fe(2+). It participates in cofactor biosynthesis; adenosylcobalamin biosynthesis; precorrin-2 from uroporphyrinogen III: step 1/1. Its pathway is cofactor biosynthesis; adenosylcobalamin biosynthesis; sirohydrochlorin from precorrin-2: step 1/1. It functions in the pathway porphyrin-containing compound metabolism; siroheme biosynthesis; precorrin-2 from uroporphyrinogen III: step 1/1. The protein operates within porphyrin-containing compound metabolism; siroheme biosynthesis; siroheme from sirohydrochlorin: step 1/1. It participates in porphyrin-containing compound metabolism; siroheme biosynthesis; sirohydrochlorin from precorrin-2: step 1/1. Multifunctional enzyme that catalyzes the SAM-dependent methylations of uroporphyrinogen III at position C-2 and C-7 to form precorrin-2 via precorrin-1. Then it catalyzes the NAD-dependent ring dehydrogenation of precorrin-2 to yield sirohydrochlorin. Finally, it catalyzes the ferrochelation of sirohydrochlorin to yield siroheme. The polypeptide is Siroheme synthase 1 (Pectobacterium atrosepticum (strain SCRI 1043 / ATCC BAA-672) (Erwinia carotovora subsp. atroseptica)).